Consider the following 151-residue polypeptide: Aspartate carbamoyltransferase regulatory chain (151 aa).

Residues Cys-107, Cys-112, Cys-135, and Cys-138 each coordinate Zn(2+).

It belongs to the PyrI family. As to quaternary structure, contains catalytic and regulatory chains. Requires Zn(2+) as cofactor.

Functionally, involved in allosteric regulation of aspartate carbamoyltransferase. In Thermococcus gammatolerans (strain DSM 15229 / JCM 11827 / EJ3), this protein is Aspartate carbamoyltransferase regulatory chain.